Reading from the N-terminus, the 177-residue chain is Large ribosomal subunit protein uL6 (177 aa).

The protein belongs to the universal ribosomal protein uL6 family. Part of the 50S ribosomal subunit.

Its function is as follows. This protein binds to the 23S rRNA, and is important in its secondary structure. It is located near the subunit interface in the base of the L7/L12 stalk, and near the tRNA binding site of the peptidyltransferase center. The protein is Large ribosomal subunit protein uL6 of Rickettsia peacockii (strain Rustic).